Reading from the N-terminus, the 246-residue chain is Ribonuclease 3 (246 aa).

The RNase III domain maps to 16–144 (LLEFQKQAGL…VIGAYYIDSG (129 aa)). Glutamate 57 lines the Mg(2+) pocket. Aspartate 61 is an active-site residue. Positions 130 and 133 each coordinate Mg(2+). Glutamate 133 is a catalytic residue. One can recognise a DRBM domain in the interval 171-240 (DYKSLLQELV…AKVAYENLCS (70 aa)).

Belongs to the ribonuclease III family. Homodimer. Requires Mg(2+) as cofactor.

Its subcellular location is the cytoplasm. It carries out the reaction Endonucleolytic cleavage to 5'-phosphomonoester.. Functionally, digests double-stranded RNA. Involved in the processing of primary rRNA transcript to yield the immediate precursors to the large and small rRNAs (23S and 16S). Processes some mRNAs, and tRNAs when they are encoded in the rRNA operon. Processes pre-crRNA and tracrRNA of type II CRISPR loci if present in the organism. This Treponema denticola (strain ATCC 35405 / DSM 14222 / CIP 103919 / JCM 8153 / KCTC 15104) protein is Ribonuclease 3.